The primary structure comprises 160 residues: Small ribosomal subunit protein uS7 (160 aa).

It belongs to the universal ribosomal protein uS7 family. In terms of assembly, part of the 30S ribosomal subunit. Contacts proteins S9 and S11.

One of the primary rRNA binding proteins, it binds directly to 16S rRNA where it nucleates assembly of the head domain of the 30S subunit. Is located at the subunit interface close to the decoding center, probably blocks exit of the E-site tRNA. This Rickettsia akari (strain Hartford) protein is Small ribosomal subunit protein uS7.